The following is a 224-amino-acid chain: MTEKSISPSRDIGVVVPDNWTGYELDVFSLPNHYCEDLECVFIPHGVIVDRTERIAHDIMRDIGDNHITVLCVLKGGYRFCTDLVEHIKNLSRNSERFISMRVDFIRLKCYRNDQCMDEMQIIGGEDLAKLSGKNVLIVEDIINTGRTMTALLNQLEKYKPKMVKVASLLVKRSASSNQYRPDYTGFEIPNKFVVGYALDYNEYFRDLHHICIINEKGKNKYKV.

The Mg(2+) site is built by Glu140 and Asp141. Residues Glu140–Thr148, Lys172, Phe193–Val194, and Asp200 each bind GMP. Asp200 is a binding site for Mg(2+).

Belongs to the purine/pyrimidine phosphoribosyltransferase family.

This Xenopus laevis (African clawed frog) protein is Phosphoribosyltransferase domain-containing protein 1 (prtfdc1).